We begin with the raw amino-acid sequence, 43 residues long: Potassium channel toxin gamma-KTx 4.6 (43 aa).

4 cysteine pairs are disulfide-bonded: Cys-5–Cys-23, Cys-11–Cys-34, Cys-20–Cys-39, and Cys-24–Cys-41.

Belongs to the ergtoxin family. Gamma-KTx 4 subfamily. Expressed by the venom gland.

Its subcellular location is the secreted. Its function is as follows. Reversibly blocks Kv11/ERG potassium channels. The sequence is that of Potassium channel toxin gamma-KTx 4.6 from Centruroides limpidus (Mexican scorpion).